The primary structure comprises 210 residues: Probable GTP-binding protein EngB (210 aa).

In terms of domain architecture, EngB-type G spans 30 to 204 (QGYEVAFAGR…YRVLADWMEL (175 aa)). Residues 38 to 45 (GRSNAGKS), 64 to 68 (GRTQL), 82 to 85 (DLPG), 149 to 152 (TKAD), and 182 to 185 (LFSA) contribute to the GTP site. 2 residues coordinate Mg(2+): S45 and T66.

This sequence belongs to the TRAFAC class TrmE-Era-EngA-EngB-Septin-like GTPase superfamily. EngB GTPase family. It depends on Mg(2+) as a cofactor.

Functionally, necessary for normal cell division and for the maintenance of normal septation. The protein is Probable GTP-binding protein EngB of Pseudomonas entomophila (strain L48).